Here is a 307-residue protein sequence, read N- to C-terminus: Cyclin-dependent kinase 5 activator 1 (307 aa).

Position 8 is a phosphoserine; by CDK5 (serine 8). A disordered region spans residues 96 to 136 (STFAQPPPAQPPAPPANQLSGSQTGVSSSVKKAPHPSVTSA). The segment covering 100–110 (QPPPAQPPAPP) has biased composition (pro residues). A compositionally biased stretch (polar residues) spans 112–125 (NQLSGSQTGVSSSV). Position 138 is a phosphothreonine; by CDK5 (threonine 138).

This sequence belongs to the cyclin-dependent kinase 5 activator family. In terms of assembly, heterodimer composed of a catalytic subunit CDK5 and a regulatory subunit CDK5R1 (p25) and macromolecular complex composed of at least CDK5, CDK5R1 (p35) and CDK5RAP1 or CDK5RAP2 or CDK5RAP3. Only the heterodimer shows kinase activity. Interacts with EPHA4 and NGEF; may mediate the activation of NGEF by EPHA4. Interacts with RASGRF2. The complex p35/CDK5 interacts with CLOCK. Post-translationally, the p35 form is proteolytically cleaved by calpain, giving rise to the p25 form. P35 has a 5 to 10 fold shorter half-life compared to p25. The conversion results in deregulation of the CDK5 kinase: p25/CDK5 kinase displays an increased and altered tau phosphorylation in comparison to the p35/CDK5 kinase in vivo. Myristoylated. A proper myristoylation signal is essential for the proper distribution of p35. In terms of processing, phosphorylation at Ser-8 and Thr-138 by CDK5 prevents calpain-mediated proteolysis. Post-translationally, ubiquitinated, leading to its degradation: degradation of p35 by proteasome results in down-regulation of CDK5 activity. During this process, CDK5 phosphorylates p35 and induces its ubiquitination and subsequent degradation. Ubiquitinated by the CRL2(FEM1B) complex, which recognizes the -Gly-Leu-Asp-Arg C-degron at the C-terminus, leading to its degradation. Brain and neuron specific.

It is found in the cell membrane. It localises to the cell projection. The protein resides in the neuron projection. The protein localises to the nucleus. Its subcellular location is the cytoplasm. It is found in the perinuclear region. It localises to the perikaryon. Functionally, p35 is a neuron specific activator of CDK5. The complex p35/CDK5 is required for neurite outgrowth and cortical lamination. Involved in dendritic spine morphogenesis by mediating the EFNA1-EPHA4 signaling. Activator of TPKII. The complex p35/CDK5 participates in the regulation of the circadian clock by modulating the function of CLOCK protein: phosphorylates CLOCK at 'Thr-451' and 'Thr-461' and regulates the transcriptional activity of the CLOCK-BMAL1 heterodimer in association with altered stability and subcellular distribution. This is Cyclin-dependent kinase 5 activator 1 (CDK5R1) from Spermophilus citellus (European ground squirrel).